A 257-amino-acid polypeptide reads, in one-letter code: tRNA-cytidine(32) 2-sulfurtransferase (257 aa).

A PP-loop motif motif is present at residues 37–42; sequence SGGKDS. Residues Cys112, Cys115, and Cys202 each contribute to the [4Fe-4S] cluster site.

This sequence belongs to the TtcA family. In terms of assembly, homodimer. The cofactor is Mg(2+). [4Fe-4S] cluster serves as cofactor.

It localises to the cytoplasm. The enzyme catalyses cytidine(32) in tRNA + S-sulfanyl-L-cysteinyl-[cysteine desulfurase] + AH2 + ATP = 2-thiocytidine(32) in tRNA + L-cysteinyl-[cysteine desulfurase] + A + AMP + diphosphate + H(+). It functions in the pathway tRNA modification. Functionally, catalyzes the ATP-dependent 2-thiolation of cytidine in position 32 of tRNA, to form 2-thiocytidine (s(2)C32). The sulfur atoms are provided by the cysteine/cysteine desulfurase (IscS) system. The polypeptide is tRNA-cytidine(32) 2-sulfurtransferase (Geobacter sulfurreducens (strain ATCC 51573 / DSM 12127 / PCA)).